The sequence spans 212 residues: MILTEPSPLFAALLIVLAYLIGCVPFAVVVSKLMGLKDPRSYGSKNPGATNVLRTGNKTAAALTLLGDAAKGWFALWLALKLAPGLSSLGYGLVLIAVFLGHLYPVSLGFKGGKGVATALGVLFAVSPWLALATVATWLLVAVVTRYSSLAALVAAFLAPVYYFFGGGTIWPLNAPTAAALVGVSALLFYRHSANIDRLIKGKESRIGSKKA.

5 helical membrane-spanning segments follow: residues 10–30 (FAAL…AVVV), 90–110 (GYGL…SLGF), 124–144 (FAVS…VAVV), 150–170 (LAAL…GGTI), and 171–191 (WPLN…LFYR).

It belongs to the PlsY family. As to quaternary structure, probably interacts with PlsX.

Its subcellular location is the cell inner membrane. It catalyses the reaction an acyl phosphate + sn-glycerol 3-phosphate = a 1-acyl-sn-glycero-3-phosphate + phosphate. It participates in lipid metabolism; phospholipid metabolism. Its function is as follows. Catalyzes the transfer of an acyl group from acyl-phosphate (acyl-PO(4)) to glycerol-3-phosphate (G3P) to form lysophosphatidic acid (LPA). This enzyme utilizes acyl-phosphate as fatty acyl donor, but not acyl-CoA or acyl-ACP. The chain is Glycerol-3-phosphate acyltransferase from Bordetella avium (strain 197N).